Here is an 893-residue protein sequence, read N- to C-terminus: Alanine--tRNA ligase (893 aa).

The Zn(2+) site is built by His575, His579, Cys677, and His681.

It belongs to the class-II aminoacyl-tRNA synthetase family. Zn(2+) is required as a cofactor.

It is found in the cytoplasm. It catalyses the reaction tRNA(Ala) + L-alanine + ATP = L-alanyl-tRNA(Ala) + AMP + diphosphate. Catalyzes the attachment of alanine to tRNA(Ala) in a two-step reaction: alanine is first activated by ATP to form Ala-AMP and then transferred to the acceptor end of tRNA(Ala). Also edits incorrectly charged Ser-tRNA(Ala) and Gly-tRNA(Ala) via its editing domain. The protein is Alanine--tRNA ligase of Synechococcus sp. (strain CC9311).